Consider the following 160-residue polypeptide: S-ribosylhomocysteine lyase (160 aa).

Residues histidine 57, histidine 61, and cysteine 127 each contribute to the Fe cation site.

The protein belongs to the LuxS family. As to quaternary structure, homodimer. Fe cation serves as cofactor.

The enzyme catalyses S-(5-deoxy-D-ribos-5-yl)-L-homocysteine = (S)-4,5-dihydroxypentane-2,3-dione + L-homocysteine. In terms of biological role, involved in the synthesis of autoinducer 2 (AI-2) which is secreted by bacteria and is used to communicate both the cell density and the metabolic potential of the environment. The regulation of gene expression in response to changes in cell density is called quorum sensing. Catalyzes the transformation of S-ribosylhomocysteine (RHC) to homocysteine (HC) and 4,5-dihydroxy-2,3-pentadione (DPD). The protein is S-ribosylhomocysteine lyase of Streptococcus sanguinis (strain SK36).